A 198-amino-acid chain; its full sequence is Ribonuclease HII (198 aa).

The 189-residue stretch at 10 to 198 (QLVAGVDEVG…PVKRALGLAS (189 aa)) folds into the RNase H type-2 domain. A divalent metal cation contacts are provided by Asp16, Glu17, and Asp108.

Belongs to the RNase HII family. Mn(2+) is required as a cofactor. The cofactor is Mg(2+).

Its subcellular location is the cytoplasm. The enzyme catalyses Endonucleolytic cleavage to 5'-phosphomonoester.. Functionally, endonuclease that specifically degrades the RNA of RNA-DNA hybrids. The protein is Ribonuclease HII of Escherichia coli O6:H1 (strain CFT073 / ATCC 700928 / UPEC).